The following is a 302-amino-acid chain: Quinolinate synthase (302 aa).

Iminosuccinate is bound by residues His24 and Ser41. Residue Cys86 coordinates [4Fe-4S] cluster. Residues 112-114 (YVN) and Ser129 contribute to the iminosuccinate site. Residue Cys171 coordinates [4Fe-4S] cluster. Iminosuccinate-binding positions include 197-199 (HPE) and Thr214. A [4Fe-4S] cluster-binding site is contributed by Cys259.

The protein belongs to the quinolinate synthase family. Type 2 subfamily. It depends on [4Fe-4S] cluster as a cofactor.

It localises to the cytoplasm. It catalyses the reaction iminosuccinate + dihydroxyacetone phosphate = quinolinate + phosphate + 2 H2O + H(+). The protein operates within cofactor biosynthesis; NAD(+) biosynthesis; quinolinate from iminoaspartate: step 1/1. Catalyzes the condensation of iminoaspartate with dihydroxyacetone phosphate to form quinolinate. In Dehalococcoides mccartyi (strain ATCC BAA-2100 / JCM 16839 / KCTC 5957 / BAV1), this protein is Quinolinate synthase.